A 794-amino-acid polypeptide reads, in one-letter code: Phenylalanine--tRNA ligase beta subunit (794 aa).

The tRNA-binding domain occupies 39-148 (APAFDNVVVA…SDAPVGQAIR (110 aa)). Residues 399-474 (PVRKPVLLRT…RLYGYDNIPS (76 aa)) enclose the B5 domain. Asp-452, Asp-458, Glu-461, and Glu-462 together coordinate Mg(2+). In terms of domain architecture, FDX-ACB spans 700–793 (SKFPPVIRDL…FEQAFGAQLR (94 aa)).

Belongs to the phenylalanyl-tRNA synthetase beta subunit family. Type 1 subfamily. Tetramer of two alpha and two beta subunits. Requires Mg(2+) as cofactor.

The protein resides in the cytoplasm. The catalysed reaction is tRNA(Phe) + L-phenylalanine + ATP = L-phenylalanyl-tRNA(Phe) + AMP + diphosphate + H(+). This Dechloromonas aromatica (strain RCB) protein is Phenylalanine--tRNA ligase beta subunit.